The sequence spans 90 residues: MWGRQIVLKIFFLVLSCVIVIETERIDICFIPCTRRYGDYECWFDCTYNRYKEGGCVEDVVVKHNRNRPTFRAVELCFFSIKFMYDFSMK.

Residues 1 to 23 form the signal peptide; that stretch reads MWGRQIVLKIFFLVLSCVIVIET. 2 disulfide bridges follow: Cys33-Cys56 and Cys42-Cys77.

Belongs to the DEFL family.

Its subcellular location is the secreted. The sequence is that of Putative defensin-like protein 64 from Arabidopsis thaliana (Mouse-ear cress).